Here is a 592-residue protein sequence, read N- to C-terminus: MCGIVGYVGRDLALPIVLGALERLEYRGYDSAGVALIEDGKLIVEKKKGKIRELVKALWGKDYKAKTGIGHTRWATHGKPTDENAHPHTDEKGEFAVVHNGIIENYLELKEELKKEGVKFRSETDTEVIAHLIAKNYRGDLLEAVLKTVKKLKGAFAFAVITVHEPNRLIGVKQGSPLIVGLGEGENFLASDIPAILPYTKKIIVLDDGEIADLTPDTVNIYNFEGEPVSKEVMITPWDLVSAEKGGFKHFMLKEIYEQPKAINDTLKGFLSTEDAIPFKLKDFRRVLIIACGTSYHAGFVGKYWIERFAGVPTEVIYASEFRYADVPVSDKDIVIGISQSGETADTKFALQSAKEKGAFTVGLVNVVGSAIDRESDFSLHTHAGPEIGVAATKTFTAQLTALYALSVRESEERENLIRLLEKVPSLVEQTLNTAEEVEKVAEKYMKKKNMLYLGRYLNYPIALEGALKLKEISYIHAEGYPAGEMKHGPIALIDENMPVVVIAPKDRVYEKILSNVEEVLARKGRVISVGFKGDETLKSKSESVMEIPKAEEPITPFLTVIPLQLFAYFIASKLGLDVDQPRNLAKTVTVE.

The active-site Nucleophile; for GATase activity is the Cys2. The 216-residue stretch at 2-217 (CGIVGYVGRD…DGEIADLTPD (216 aa)) folds into the Glutamine amidotransferase type-2 domain. SIS domains lie at 277–416 (IPFK…EREN) and 441–582 (VAEK…VDQP). Lys587 (for Fru-6P isomerization activity) is an active-site residue.

As to quaternary structure, homodimer.

Its subcellular location is the cytoplasm. It carries out the reaction D-fructose 6-phosphate + L-glutamine = D-glucosamine 6-phosphate + L-glutamate. In terms of biological role, catalyzes the first step in hexosamine metabolism, converting fructose-6P into glucosamine-6P using glutamine as a nitrogen source. This chain is Glutamine--fructose-6-phosphate aminotransferase [isomerizing], found in Aquifex aeolicus (strain VF5).